We begin with the raw amino-acid sequence, 683 residues long: Methionine--tRNA ligase (683 aa).

Positions 15–25 (PYANGSIHLGH) match the 'HIGH' region motif. Cys146, Cys149, Cys159, and Cys162 together coordinate Zn(2+). Positions 332-336 (KMSKS) match the 'KMSKS' region motif. ATP is bound at residue Lys335. In terms of domain architecture, tRNA-binding spans 582–683 (DFAKVDLRIA…QGAQAGMRVM (102 aa)).

Belongs to the class-I aminoacyl-tRNA synthetase family. MetG type 1 subfamily. In terms of assembly, homodimer. It depends on Zn(2+) as a cofactor.

It is found in the cytoplasm. It carries out the reaction tRNA(Met) + L-methionine + ATP = L-methionyl-tRNA(Met) + AMP + diphosphate. Functionally, is required not only for elongation of protein synthesis but also for the initiation of all mRNA translation through initiator tRNA(fMet) aminoacylation. This is Methionine--tRNA ligase from Vibrio cholerae serotype O1 (strain ATCC 39315 / El Tor Inaba N16961).